A 134-amino-acid polypeptide reads, in one-letter code: Large-conductance mechanosensitive channel (134 aa).

2 helical membrane passes run 16–36 and 81–101; these read VIDL…VTAL and GDFI…FIIV.

The protein belongs to the MscL family. In terms of assembly, homopentamer.

It is found in the cell inner membrane. Functionally, channel that opens in response to stretch forces in the membrane lipid bilayer. May participate in the regulation of osmotic pressure changes within the cell. The polypeptide is Large-conductance mechanosensitive channel (Xylella fastidiosa (strain Temecula1 / ATCC 700964)).